The primary structure comprises 86 residues: uncharacterized protein (86 aa).

Residues valine 63–phenylalanine 85 traverse the membrane as a helical segment.

The protein localises to the membrane. This is an uncharacterized protein from Dictyostelium discoideum (Social amoeba).